The following is a 1018-amino-acid chain: Ubiquitin carboxyl-terminal hydrolase 35 (1018 aa).

The region spanning 441–926 (IGLINLGNTC…TAYVLFYRQR (486 aa)) is the USP domain. Cys-450 (nucleophile) is an active-site residue. Disordered stretches follow at residues 544 to 566 (QKLK…STSV) and 610 to 757 (RLGS…GSEG). Over residues 552 to 561 (PSPPEEPPAP) the composition is skewed to pro residues. Ser-613 carries the phosphoserine modification. Basic and acidic residues-rich tracts occupy residues 673-691 (QEER…TEKE), 699-709 (STRGEGEREKE), and 718-728 (KVEKETEKEAE). His-862 functions as the Proton acceptor in the catalytic mechanism. The tract at residues 984–1011 (HWGRGFDEDKDEDEGSPGGCNPAGGNGG) is disordered. Positions 999–1011 (SPGGCNPAGGNGG) are enriched in gly residues.

The protein belongs to the peptidase C19 family. Homodimer (via C-terminal region). Interacts with HSP90AA1. Ubiquitinated by CHIP/STUB1 in an HSP90-dependent manner; leading to proteasomal degradation. This ubiquitination can be reversed through auto-deubiquitinating activity. As to expression, expressed in testis, pancreas and skeletal muscle.

It localises to the cytoplasm. Its subcellular location is the mitochondrion. The catalysed reaction is Thiol-dependent hydrolysis of ester, thioester, amide, peptide and isopeptide bonds formed by the C-terminal Gly of ubiquitin (a 76-residue protein attached to proteins as an intracellular targeting signal).. Deubiquitinase that plays a role in different processes including cell cycle regulation, mitophagy or endoplasmic reticulum stress. Inhibits TNFalpha-induced NF-kappa-B activation through stabilizing TNIP2 protein via deubiquitination. Plays an essential role during mitosis by deubiquitinating and thereby regulating the levels of Aurora B/AURKB protein. In addition, regulates the protein levels of other key component of the chromosomal passenger complex (CPC) such as survivin/BIRC5 or Borealin/CDCA8 by enhancing their stability. Regulates the degradation of mitochondria through the process of autophagy termed mitophagy. The sequence is that of Ubiquitin carboxyl-terminal hydrolase 35 (USP35) from Homo sapiens (Human).